A 258-amino-acid chain; its full sequence is UPF0246 protein Sfri_2896 (258 aa).

The protein belongs to the UPF0246 family.

The protein is UPF0246 protein Sfri_2896 of Shewanella frigidimarina (strain NCIMB 400).